The sequence spans 366 residues: C-X-C chemokine receptor type 3 (366 aa).

The Extracellular segment spans residues 1 to 55; sequence MVPEMSERQEFQASEFAYLLENSSYDYGENETYFCCTSPPCPQDFSLNFDRTFLP. The N-linked (GlcNAc...) asparagine glycan is linked to N22. Sulfotyrosine occurs at positions 25 and 27. Residue N30 is glycosylated (N-linked (GlcNAc...) asparagine). Residues 56-76 form a helical membrane-spanning segment; it reads VLYSLLFVLGLLGNGVVAVVL. At 77–88 the chain is on the cytoplasmic side; the sequence is LSQRAALSSTDT. Residues 89–109 form a helical membrane-spanning segment; that stretch reads FLLHLAVADALLVLTLPLWAV. Residues 110-124 are Extracellular-facing; that stretch reads DAAIQWVFGSGLCKV. Cysteines 122 and 201 form a disulfide. A helical membrane pass occupies residues 125 to 145; it reads AGALFNINFYAGALLLACISF. The Cytoplasmic segment spans residues 146–167; the sequence is DRYLSIVHATQFYRRGPPARVA. A helical membrane pass occupies residues 168–188; it reads LTCVAVWGLCLLFALPDFIFL. The Extracellular segment spans residues 189–221; sequence SSHHDNRLNATHCQYNFPQEGRTALRVLQLVAG. An N-linked (GlcNAc...) asparagine glycan is attached at N197. The helical transmembrane segment at 222–242 threads the bilayer; sequence FLLPLLVMAYCYARILTVLLV. At 243 to 254 the chain is on the cytoplasmic side; the sequence is SRGQRRLRAMRL. The chain crosses the membrane as a helical span at residues 255–275; sequence VVVVVVAFALCWTPYHLVVLV. The Extracellular portion of the chain corresponds to 276–299; sequence DTLMDLGALARNCGRESRVDVAKS. The chain crosses the membrane as a helical span at residues 300–320; that stretch reads VTSGMGYMHCCLNPLLYAFVG. Residues 321–366 lie on the Cytoplasmic side of the membrane; that stretch reads VKFRERMWVLLMRLGCPDQRGHQRQPSASRRDSSWSETTEASYSGL. The interval 339–366 is disordered; it reads QRGHQRQPSASRRDSSWSETTEASYSGL. The segment covering 355–366 has biased composition (polar residues); that stretch reads WSETTEASYSGL.

It belongs to the G-protein coupled receptor 1 family. In terms of assembly, homomer. Forms heteromers with ACKR4. Interacts with PF4/CXCL4. Sulfation on Tyr-25 and Tyr-27 is essential for CXCL10 binding. Post-translationally, N-glycosylated.

Its subcellular location is the cell membrane. Its function is as follows. Receptor for the C-X-C chemokine CXCL9, CXCL10 and CXCL11 and mediates the proliferation, survival and angiogenic activity of mesangial cells through a heterotrimeric G-protein signaling pathway. Probably promotes cell chemotaxis response. Binds to CCL21. Upon activation by PF4, induces activated T-lymphocytes migration mediated via downstream Ras/extracellular signal-regulated kinase (ERK) signaling. This is C-X-C chemokine receptor type 3 (CXCR3) from Capra hircus (Goat).